A 351-amino-acid chain; its full sequence is uncharacterized protein (351 aa).

Residues Asp215, Asp226, His290, Glu319, and Glu333 each contribute to the Mn(2+) site.

The protein belongs to the peptidase M24B family. It depends on Mn(2+) as a cofactor.

This is an uncharacterized protein from Staphylococcus epidermidis (strain ATCC 35984 / DSM 28319 / BCRC 17069 / CCUG 31568 / BM 3577 / RP62A).